Consider the following 503-residue polypeptide: Lysine--tRNA ligase (503 aa).

Mg(2+)-binding residues include glutamate 414 and glutamate 421.

The protein belongs to the class-II aminoacyl-tRNA synthetase family. In terms of assembly, homodimer. Requires Mg(2+) as cofactor.

It is found in the cytoplasm. It carries out the reaction tRNA(Lys) + L-lysine + ATP = L-lysyl-tRNA(Lys) + AMP + diphosphate. The chain is Lysine--tRNA ligase from Neisseria meningitidis serogroup B (strain ATCC BAA-335 / MC58).